Consider the following 117-residue polypeptide: Large ribosomal subunit protein uL18 (117 aa).

The protein belongs to the universal ribosomal protein uL18 family. As to quaternary structure, part of the 50S ribosomal subunit; part of the 5S rRNA/L5/L18/L25 subcomplex. Contacts the 5S and 23S rRNAs.

Its function is as follows. This is one of the proteins that bind and probably mediate the attachment of the 5S RNA into the large ribosomal subunit, where it forms part of the central protuberance. This chain is Large ribosomal subunit protein uL18, found in Phytoplasma mali (strain AT).